A 381-amino-acid polypeptide reads, in one-letter code: Alcohol dehydrogenase class-3 (381 aa).

Residue cysteine 49 coordinates Zn(2+). Histidine 50 provides a ligand contact to NAD(+). An alcohol contacts are provided by threonine 51 and histidine 71. Zn(2+) is bound by residues histidine 71, glutamate 72, cysteine 101, cysteine 104, cysteine 107, cysteine 115, and cysteine 179. NAD(+)-binding positions include 204–209 (GLGTVG), aspartate 228, lysine 233, isoleucine 274, 297–299 (VGV), 322–324 (TAF), and arginine 374.

The protein belongs to the zinc-containing alcohol dehydrogenase family. Class-III subfamily. Homodimer. It depends on Zn(2+) as a cofactor.

The protein localises to the cytoplasm. It carries out the reaction a primary alcohol + NAD(+) = an aldehyde + NADH + H(+). The enzyme catalyses a secondary alcohol + NAD(+) = a ketone + NADH + H(+). It catalyses the reaction S-(hydroxymethyl)glutathione + NADP(+) = S-formylglutathione + NADPH + H(+). The catalysed reaction is S-(hydroxymethyl)glutathione + NAD(+) = S-formylglutathione + NADH + H(+). This chain is Alcohol dehydrogenase class-3, found in Oryza sativa subsp. japonica (Rice).